The sequence spans 338 residues: Nicotinate-nucleotide--dimethylbenzimidazole phosphoribosyltransferase (338 aa).

The active-site Proton acceptor is the E305.

The protein belongs to the CobT family.

It carries out the reaction 5,6-dimethylbenzimidazole + nicotinate beta-D-ribonucleotide = alpha-ribazole 5'-phosphate + nicotinate + H(+). The protein operates within nucleoside biosynthesis; alpha-ribazole biosynthesis; alpha-ribazole from 5,6-dimethylbenzimidazole: step 1/2. In terms of biological role, catalyzes the synthesis of alpha-ribazole-5'-phosphate from nicotinate mononucleotide (NAMN) and 5,6-dimethylbenzimidazole (DMB). The sequence is that of Nicotinate-nucleotide--dimethylbenzimidazole phosphoribosyltransferase from Rhizobium etli (strain CIAT 652).